Here is a 236-residue protein sequence, read N- to C-terminus: Probable 2-phosphosulfolactate phosphatase (236 aa).

Belongs to the ComB family. It depends on Mg(2+) as a cofactor.

It catalyses the reaction (2R)-O-phospho-3-sulfolactate + H2O = (2R)-3-sulfolactate + phosphate. The protein is Probable 2-phosphosulfolactate phosphatase of Gloeobacter violaceus (strain ATCC 29082 / PCC 7421).